Reading from the N-terminus, the 278-residue chain is Large ribosomal subunit protein uL2 (278 aa).

Disordered regions lie at residues 32 to 57 (ALTE…IGGG) and 221 to 278 (RGVA…KKKR). Residues 269 to 278 (IRSRHAKKKR) are compositionally biased toward basic residues.

The protein belongs to the universal ribosomal protein uL2 family. As to quaternary structure, part of the 50S ribosomal subunit. Forms a bridge to the 30S subunit in the 70S ribosome.

One of the primary rRNA binding proteins. Required for association of the 30S and 50S subunits to form the 70S ribosome, for tRNA binding and peptide bond formation. It has been suggested to have peptidyltransferase activity; this is somewhat controversial. Makes several contacts with the 16S rRNA in the 70S ribosome. The protein is Large ribosomal subunit protein uL2 of Zymomonas mobilis subsp. mobilis (strain ATCC 31821 / ZM4 / CP4).